Here is a 218-residue protein sequence, read N- to C-terminus: Glutathione S-transferase U22 (218 aa).

An N-acetylalanine modification is found at Ala-2. Residues Asp-3–Asn-82 form the GST N-terminal domain. Glutathione is bound by residues Ser-13–Pro-14, Asp-39–Lys-40, Lys-53–Ile-54, and Glu-66–Ser-67. In terms of domain architecture, GST C-terminal spans Asp-88 to Phe-208. Phosphothreonine is present on Thr-149.

Belongs to the GST superfamily. Tau family.

The protein localises to the cytoplasm. It localises to the cytosol. The enzyme catalyses RX + glutathione = an S-substituted glutathione + a halide anion + H(+). Functionally, may be involved in the conjugation of reduced glutathione to a wide number of exogenous and endogenous hydrophobic electrophiles and have a detoxification role against certain herbicides. This chain is Glutathione S-transferase U22 (GSTU22), found in Arabidopsis thaliana (Mouse-ear cress).